An 881-amino-acid chain; its full sequence is Probable inorganic carbon transporter subunit DabA (881 aa).

Zn(2+)-binding residues include Cys399, Asp401, His585, and Cys600.

Belongs to the inorganic carbon transporter (TC 9.A.2) DabA family. Forms a complex with DabB. It depends on Zn(2+) as a cofactor.

Its subcellular location is the cell membrane. Functionally, part of an energy-coupled inorganic carbon pump. In Geobacillus sp. (strain WCH70), this protein is Probable inorganic carbon transporter subunit DabA.